Reading from the N-terminus, the 515-residue chain is Endoglucanase 2 (515 aa).

Positions 1-31 are cleaved as a signal peptide; sequence MVAKPRSRCCCCSVFIGVIILIAIIIAVIFT. Asparagine 37 carries N-linked (GlcNAc...) asparagine glycosylation. Aspartate 100 acts as the Nucleophile in catalysis. A glycan (N-linked (GlcNAc...) asparagine) is linked at asparagine 250. The active site involves histidine 433. N-linked (GlcNAc...) asparagine glycosylation occurs at asparagine 475. Aspartate 480 is an active-site residue. N-linked (GlcNAc...) asparagine glycosylation occurs at asparagine 483. The active site involves glutamate 489.

It belongs to the glycosyl hydrolase 9 (cellulase E) family.

The protein localises to the secreted. It carries out the reaction Endohydrolysis of (1-&gt;4)-beta-D-glucosidic linkages in cellulose, lichenin and cereal beta-D-glucans.. In Arabidopsis thaliana (Mouse-ear cress), this protein is Endoglucanase 2.